Consider the following 141-residue polypeptide: Hemoglobin subunit alpha (141 aa).

The Globin domain occupies 1–141; sequence VLSPADKTNV…VSTVLTSKYR (141 aa). S3 carries the phosphoserine modification. K7 bears the N6-succinyllysine mark. T8 is modified (phosphothreonine). At K11 the chain carries N6-succinyllysine. S35 is modified (phosphoserine). N6-succinyllysine is present on K40. S49 is subject to Phosphoserine. H58 contacts O2. H87 contributes to the heme b binding site. Residue S102 is modified to Phosphoserine. Phosphothreonine is present on T108. S124 carries the post-translational modification Phosphoserine. A phosphothreonine mark is found at T134 and T137. S138 carries the phosphoserine modification.

Belongs to the globin family. Heterotetramer of two alpha chains and two beta chains. As to expression, red blood cells.

Functionally, involved in oxygen transport from the lung to the various peripheral tissues. Hemopressin acts as an antagonist peptide of the cannabinoid receptor CNR1. Hemopressin-binding efficiently blocks cannabinoid receptor CNR1 and subsequent signaling. The chain is Hemoglobin subunit alpha (HBA) from Eulemur fulvus fulvus (Brown lemur).